Reading from the N-terminus, the 166-residue chain is Small ribosomal subunit protein uS5 (166 aa).

One can recognise an S5 DRBM domain in the interval 11-74 (LNEKLIAVNR…EKARRNMFTI (64 aa)).

This sequence belongs to the universal ribosomal protein uS5 family. Part of the 30S ribosomal subunit. Contacts proteins S4 and S8.

With S4 and S12 plays an important role in translational accuracy. In terms of biological role, located at the back of the 30S subunit body where it stabilizes the conformation of the head with respect to the body. This Aliivibrio salmonicida (strain LFI1238) (Vibrio salmonicida (strain LFI1238)) protein is Small ribosomal subunit protein uS5.